A 154-amino-acid chain; its full sequence is Insulin-like growth factor 1 (154 aa).

The b stretch occupies residues glycine 50 to threonine 78. Disulfide bonds link cysteine 55–cysteine 97, cysteine 67–cysteine 110, and cysteine 96–cysteine 101. Residues glycine 79–threonine 90 form a c region. The interval glycine 91 to alanine 111 is a. Residues proline 112–alanine 119 form a d region. A propeptide spans arginine 120–methionine 154 (e peptide). The interval serine 121–methionine 154 is disordered. Residues arginine 126 to leucine 139 show a composition bias toward basic and acidic residues. The segment covering lysine 140–methionine 154 has biased composition (polar residues).

It belongs to the insulin family. Forms a ternary complex with IGFR1 and ITGAV:ITGB3. Forms a ternary complex with IGFR1 and ITGA6:ITGB4. Forms a ternary complex with IGFBP3 and ALS.

It is found in the secreted. The insulin-like growth factors, isolated from plasma, are structurally and functionally related to insulin but have a much higher growth-promoting activity. May be a physiological regulator of [1-14C]-2-deoxy-D-glucose (2DG) transport and glycogen synthesis in osteoblasts. Stimulates glucose transport in bone-derived osteoblastic (PyMS) cells and is effective at much lower concentrations than insulin, not only regarding glycogen and DNA synthesis but also with regard to enhancing glucose uptake. May play a role in synapse maturation. Ca(2+)-dependent exocytosis of IGF1 is required for sensory perception of smell in the olfactory bulb. Acts as a ligand for IGF1R. Binds to the alpha subunit of IGF1R, leading to the activation of the intrinsic tyrosine kinase activity which autophosphorylates tyrosine residues in the beta subunit thus initiating a cascade of down-stream signaling events leading to activation of the PI3K-AKT/PKB and the Ras-MAPK pathways. Binds to integrins ITGAV:ITGB3 and ITGA6:ITGB4. Its binding to integrins and subsequent ternary complex formation with integrins and IGFR1 are essential for IGF1 signaling. Induces the phosphorylation and activation of IGFR1, MAPK3/ERK1, MAPK1/ERK2 and AKT1. As part of the MAPK/ERK signaling pathway, acts as a negative regulator of apoptosis in cardiomyocytes via promotion of STUB1/CHIP-mediated ubiquitination and degradation of ICER-type isoforms of CREM. The sequence is that of Insulin-like growth factor 1 from Bos taurus (Bovine).